Reading from the N-terminus, the 376-residue chain is Succinyl-diaminopimelate desuccinylase (376 aa).

His-67 contacts Zn(2+). Residue Asp-69 is part of the active site. Asp-100 lines the Zn(2+) pocket. Glu-134 acts as the Proton acceptor in catalysis. 3 residues coordinate Zn(2+): Glu-135, Glu-163, and His-349.

The protein belongs to the peptidase M20A family. DapE subfamily. As to quaternary structure, homodimer. Zn(2+) serves as cofactor. It depends on Co(2+) as a cofactor.

The catalysed reaction is N-succinyl-(2S,6S)-2,6-diaminopimelate + H2O = (2S,6S)-2,6-diaminopimelate + succinate. It functions in the pathway amino-acid biosynthesis; L-lysine biosynthesis via DAP pathway; LL-2,6-diaminopimelate from (S)-tetrahydrodipicolinate (succinylase route): step 3/3. Its function is as follows. Catalyzes the hydrolysis of N-succinyl-L,L-diaminopimelic acid (SDAP), forming succinate and LL-2,6-diaminopimelate (DAP), an intermediate involved in the bacterial biosynthesis of lysine and meso-diaminopimelic acid, an essential component of bacterial cell walls. The protein is Succinyl-diaminopimelate desuccinylase of Pseudoalteromonas translucida (strain TAC 125).